We begin with the raw amino-acid sequence, 144 residues long: Large ribosomal subunit protein uL16 (144 aa).

The protein belongs to the universal ribosomal protein uL16 family. Part of the 50S ribosomal subunit.

Functionally, binds 23S rRNA and is also seen to make contacts with the A and possibly P site tRNAs. The protein is Large ribosomal subunit protein uL16 of Thermoanaerobacter pseudethanolicus (strain ATCC 33223 / 39E) (Clostridium thermohydrosulfuricum).